Consider the following 514-residue polypeptide: Bifunctional purine biosynthesis protein PurH (514 aa).

The MGS-like domain maps to 1–145 (MIKRALISVS…KNYQDVAVIV (145 aa)).

The protein belongs to the PurH family.

It catalyses the reaction (6R)-10-formyltetrahydrofolate + 5-amino-1-(5-phospho-beta-D-ribosyl)imidazole-4-carboxamide = 5-formamido-1-(5-phospho-D-ribosyl)imidazole-4-carboxamide + (6S)-5,6,7,8-tetrahydrofolate. The catalysed reaction is IMP + H2O = 5-formamido-1-(5-phospho-D-ribosyl)imidazole-4-carboxamide. Its pathway is purine metabolism; IMP biosynthesis via de novo pathway; 5-formamido-1-(5-phospho-D-ribosyl)imidazole-4-carboxamide from 5-amino-1-(5-phospho-D-ribosyl)imidazole-4-carboxamide (10-formyl THF route): step 1/1. The protein operates within purine metabolism; IMP biosynthesis via de novo pathway; IMP from 5-formamido-1-(5-phospho-D-ribosyl)imidazole-4-carboxamide: step 1/1. This is Bifunctional purine biosynthesis protein PurH from Ruminiclostridium cellulolyticum (strain ATCC 35319 / DSM 5812 / JCM 6584 / H10) (Clostridium cellulolyticum).